The following is a 576-amino-acid chain: Sulfite reductase [NADPH] hemoprotein beta-component (576 aa).

Positions 439, 445, 485, and 489 each coordinate [4Fe-4S] cluster. Cys-489 is a binding site for siroheme.

The protein belongs to the nitrite and sulfite reductase 4Fe-4S domain family. Alpha(8)-beta(8). The alpha component is a flavoprotein, the beta component is a hemoprotein. It depends on siroheme as a cofactor. [4Fe-4S] cluster is required as a cofactor.

The enzyme catalyses hydrogen sulfide + 3 NADP(+) + 3 H2O = sulfite + 3 NADPH + 4 H(+). Its pathway is sulfur metabolism; hydrogen sulfide biosynthesis; hydrogen sulfide from sulfite (NADPH route): step 1/1. In terms of biological role, component of the sulfite reductase complex that catalyzes the 6-electron reduction of sulfite to sulfide. This is one of several activities required for the biosynthesis of L-cysteine from sulfate. This is Sulfite reductase [NADPH] hemoprotein beta-component from Aliivibrio salmonicida (strain LFI1238) (Vibrio salmonicida (strain LFI1238)).